The primary structure comprises 307 residues: Ribosomal RNA small subunit methyltransferase H (307 aa).

S-adenosyl-L-methionine contacts are provided by residues 32 to 34, D52, F78, D100, and Q107; that span reads GGH.

This sequence belongs to the methyltransferase superfamily. RsmH family.

Its subcellular location is the cytoplasm. It catalyses the reaction cytidine(1402) in 16S rRNA + S-adenosyl-L-methionine = N(4)-methylcytidine(1402) in 16S rRNA + S-adenosyl-L-homocysteine + H(+). Functionally, specifically methylates the N4 position of cytidine in position 1402 (C1402) of 16S rRNA. In Coxiella burnetii (strain Dugway 5J108-111), this protein is Ribosomal RNA small subunit methyltransferase H.